Reading from the N-terminus, the 204-residue chain is Shikimate kinase (204 aa).

35-40 (ASGKST) contributes to the ATP binding site. Residue Ser-39 coordinates Mg(2+). 3 residues coordinate substrate: Asp-57, Arg-81, and Gly-103. Arg-142 provides a ligand contact to ATP. Arg-169 is a substrate binding site.

It belongs to the shikimate kinase family. Monomer. Mg(2+) serves as cofactor.

The protein resides in the cytoplasm. The enzyme catalyses shikimate + ATP = 3-phosphoshikimate + ADP + H(+). It participates in metabolic intermediate biosynthesis; chorismate biosynthesis; chorismate from D-erythrose 4-phosphate and phosphoenolpyruvate: step 5/7. Catalyzes the specific phosphorylation of the 3-hydroxyl group of shikimic acid using ATP as a cosubstrate. The protein is Shikimate kinase of Salinibacter ruber (strain DSM 13855 / M31).